A 552-amino-acid polypeptide reads, in one-letter code: DNA ligase (552 aa).

Position 229 (glutamate 229) interacts with ATP. Catalysis depends on lysine 231, which acts as the N6-AMP-lysine intermediate. 2 residues coordinate ATP: arginine 236 and glutamate 283. Residues glutamate 283 and glutamate 377 each coordinate Mg(2+). ATP contacts are provided by lysine 382 and lysine 397.

It belongs to the ATP-dependent DNA ligase family. In terms of assembly, interacts with host TOP2A and TOP2B. Mg(2+) is required as a cofactor.

Its subcellular location is the host cytoplasm. The enzyme catalyses ATP + (deoxyribonucleotide)n-3'-hydroxyl + 5'-phospho-(deoxyribonucleotide)m = (deoxyribonucleotide)n+m + AMP + diphosphate.. Functionally, DNA ligase that seals nicks in double-stranded DNA during DNA replication, DNA recombination and DNA repair. Recruits cellular topoisomerase II to sites of viral replication and assembly. This is DNA ligase (OPG180) from Vaccinia virus (strain Copenhagen) (VACV).